We begin with the raw amino-acid sequence, 392 residues long: Pyruvate synthase subunit PorA (392 aa).

In terms of assembly, heterotetramer of one alpha, one beta, one delta and one gamma chain.

It catalyses the reaction 2 oxidized [2Fe-2S]-[ferredoxin] + pyruvate + CoA = 2 reduced [2Fe-2S]-[ferredoxin] + acetyl-CoA + CO2 + H(+). This chain is Pyruvate synthase subunit PorA (porA), found in Thermotoga maritima (strain ATCC 43589 / DSM 3109 / JCM 10099 / NBRC 100826 / MSB8).